Here is a 232-residue protein sequence, read N- to C-terminus: Histone H1.X (232 aa).

In terms of domain architecture, H15 spans 36-112; sequence HHPSYMDMIK…GATGSFRMGK (77 aa). The tract at residues 142 to 232 is disordered; it reads ISKAEKTKPS…LRTGTRKSYC (91 aa). Positions 159-197 are enriched in basic residues; the sequence is KKGKPISTMKKRGVMSKKRSSKNKMAPKAKSHGLKKKGP.

This sequence belongs to the histone H1/H5 family.

It is found in the nucleus. Its subcellular location is the chromosome. The polypeptide is Histone H1.X (hil-1) (Caenorhabditis elegans).